Consider the following 231-residue polypeptide: Large ribosomal subunit protein uL1 (231 aa).

Belongs to the universal ribosomal protein uL1 family. As to quaternary structure, part of the 50S ribosomal subunit.

In terms of biological role, binds directly to 23S rRNA. The L1 stalk is quite mobile in the ribosome, and is involved in E site tRNA release. Its function is as follows. Protein L1 is also a translational repressor protein, it controls the translation of the L11 operon by binding to its mRNA. The chain is Large ribosomal subunit protein uL1 from Herminiimonas arsenicoxydans.